The chain runs to 567 residues: Proline--tRNA ligase (567 aa).

The protein belongs to the class-II aminoacyl-tRNA synthetase family. ProS type 1 subfamily. In terms of assembly, homodimer.

The protein resides in the cytoplasm. The catalysed reaction is tRNA(Pro) + L-proline + ATP = L-prolyl-tRNA(Pro) + AMP + diphosphate. In terms of biological role, catalyzes the attachment of proline to tRNA(Pro) in a two-step reaction: proline is first activated by ATP to form Pro-AMP and then transferred to the acceptor end of tRNA(Pro). As ProRS can inadvertently accommodate and process non-cognate amino acids such as alanine and cysteine, to avoid such errors it has two additional distinct editing activities against alanine. One activity is designated as 'pretransfer' editing and involves the tRNA(Pro)-independent hydrolysis of activated Ala-AMP. The other activity is designated 'posttransfer' editing and involves deacylation of mischarged Ala-tRNA(Pro). The misacylated Cys-tRNA(Pro) is not edited by ProRS. The sequence is that of Proline--tRNA ligase from Stenotrophomonas maltophilia (strain R551-3).